A 393-amino-acid chain; its full sequence is Methylthioribose-1-phosphate isomerase (393 aa).

Catalysis depends on aspartate 265, which acts as the Proton donor.

This sequence belongs to the eIF-2B alpha/beta/delta subunits family. MtnA subfamily.

The protein resides in the cytoplasm. The protein localises to the nucleus. The catalysed reaction is 5-(methylsulfanyl)-alpha-D-ribose 1-phosphate = 5-(methylsulfanyl)-D-ribulose 1-phosphate. It participates in amino-acid biosynthesis; L-methionine biosynthesis via salvage pathway; L-methionine from S-methyl-5-thio-alpha-D-ribose 1-phosphate: step 1/6. Catalyzes the interconversion of methylthioribose-1-phosphate (MTR-1-P) into methylthioribulose-1-phosphate (MTRu-1-P). In Cryptococcus neoformans var. neoformans serotype D (strain JEC21 / ATCC MYA-565) (Filobasidiella neoformans), this protein is Methylthioribose-1-phosphate isomerase.